We begin with the raw amino-acid sequence, 149 residues long: Large-conductance mechanosensitive channel (149 aa).

3 consecutive transmembrane segments (helical) span residues 16–36 (VMDL…VNSV), 40–60 (LIMP…KFIL), and 89–109 (GSFI…FMMV).

The protein belongs to the MscL family. Homopentamer.

Its subcellular location is the cell inner membrane. Functionally, channel that opens in response to stretch forces in the membrane lipid bilayer. May participate in the regulation of osmotic pressure changes within the cell. The polypeptide is Large-conductance mechanosensitive channel (Paraburkholderia phymatum (strain DSM 17167 / CIP 108236 / LMG 21445 / STM815) (Burkholderia phymatum)).